The chain runs to 141 residues: Putative nickel-responsive regulator (141 aa).

Ni(2+)-binding residues include His83, His94, His96, and Cys102.

Belongs to the transcriptional regulatory CopG/NikR family. Requires Ni(2+) as cofactor.

Transcriptional regulator. The polypeptide is Putative nickel-responsive regulator (Methanopyrus kandleri (strain AV19 / DSM 6324 / JCM 9639 / NBRC 100938)).